Consider the following 251-residue polypeptide: Triosephosphate isomerase (251 aa).

9–11 (NWK) lines the substrate pocket. H95 serves as the catalytic Electrophile. E167 serves as the catalytic Proton acceptor. Substrate contacts are provided by residues G173, S213, and 234–235 (GG).

This sequence belongs to the triosephosphate isomerase family. Homodimer.

The protein resides in the cytoplasm. The enzyme catalyses D-glyceraldehyde 3-phosphate = dihydroxyacetone phosphate. It functions in the pathway carbohydrate biosynthesis; gluconeogenesis. Its pathway is carbohydrate degradation; glycolysis; D-glyceraldehyde 3-phosphate from glycerone phosphate: step 1/1. Its function is as follows. Involved in the gluconeogenesis. Catalyzes stereospecifically the conversion of dihydroxyacetone phosphate (DHAP) to D-glyceraldehyde-3-phosphate (G3P). The protein is Triosephosphate isomerase of Lacticaseibacillus casei (strain BL23) (Lactobacillus casei).